The chain runs to 165 residues: Growth arrest and DNA damage-inducible protein GADD45 alpha (165 aa).

Threonine 2 is modified (phosphothreonine).

The protein belongs to the GADD45 family. As to quaternary structure, interacts with AURKA, PCNA, GADD45GIP1 and MAPK14.

Its subcellular location is the nucleus. Its function is as follows. Might affect PCNA interaction with some CDK (cell division protein kinase) complexes; stimulates DNA excision repair in vitro and inhibits entry of cells into S phase. In T-cells, functions as a regulator of p38 MAPKs by inhibiting p88 phosphorylation and activity. This is Growth arrest and DNA damage-inducible protein GADD45 alpha (GADD45A) from Felis catus (Cat).